Here is a 249-residue protein sequence, read N- to C-terminus: Ubiquinone/menaquinone biosynthesis C-methyltransferase UbiE (249 aa).

Residues Thr72, Asp93, and 121-122 (DA) each bind S-adenosyl-L-methionine.

The protein belongs to the class I-like SAM-binding methyltransferase superfamily. MenG/UbiE family.

It catalyses the reaction a 2-demethylmenaquinol + S-adenosyl-L-methionine = a menaquinol + S-adenosyl-L-homocysteine + H(+). It carries out the reaction a 2-methoxy-6-(all-trans-polyprenyl)benzene-1,4-diol + S-adenosyl-L-methionine = a 5-methoxy-2-methyl-3-(all-trans-polyprenyl)benzene-1,4-diol + S-adenosyl-L-homocysteine + H(+). The protein operates within quinol/quinone metabolism; menaquinone biosynthesis; menaquinol from 1,4-dihydroxy-2-naphthoate: step 2/2. Its pathway is cofactor biosynthesis; ubiquinone biosynthesis. Methyltransferase required for the conversion of demethylmenaquinol (DMKH2) to menaquinol (MKH2) and the conversion of 2-polyprenyl-6-methoxy-1,4-benzoquinol (DDMQH2) to 2-polyprenyl-3-methyl-6-methoxy-1,4-benzoquinol (DMQH2). The polypeptide is Ubiquinone/menaquinone biosynthesis C-methyltransferase UbiE (Teredinibacter turnerae (strain ATCC 39867 / T7901)).